The primary structure comprises 268 residues: Undecaprenyl-diphosphatase (268 aa).

A run of 8 helical transmembrane segments spans residues 1-21 (MSLI…FLPI), 39-59 (QGPL…LVYF), 85-105 (ALLV…LVAF), 110-130 (ALRS…PLWL), 144-164 (MSFK…IPGA), 187-207 (FSML…LIEL), 221-241 (DGLI…AVLM), and 247-267 (IGFL…LVFF).

It belongs to the UppP family.

It is found in the cell inner membrane. The catalysed reaction is di-trans,octa-cis-undecaprenyl diphosphate + H2O = di-trans,octa-cis-undecaprenyl phosphate + phosphate + H(+). Its function is as follows. Catalyzes the dephosphorylation of undecaprenyl diphosphate (UPP). Confers resistance to bacitracin. The sequence is that of Undecaprenyl-diphosphatase from Maricaulis maris (strain MCS10) (Caulobacter maris).